Reading from the N-terminus, the 81-residue chain is ATP synthase subunit c, chloroplastic (81 aa).

Transmembrane regions (helical) follow at residues 3-23 and 57-77; these read PLIP…ASIG and LAFM…LLFA.

The protein belongs to the ATPase C chain family. As to quaternary structure, F-type ATPases have 2 components, F(1) - the catalytic core - and F(0) - the membrane proton channel. F(1) has five subunits: alpha(3), beta(3), gamma(1), delta(1), epsilon(1). F(0) has four main subunits: a(1), b(1), b'(1) and c(10-14). The alpha and beta chains form an alternating ring which encloses part of the gamma chain. F(1) is attached to F(0) by a central stalk formed by the gamma and epsilon chains, while a peripheral stalk is formed by the delta, b and b' chains.

The protein localises to the plastid. The protein resides in the chloroplast thylakoid membrane. Its function is as follows. F(1)F(0) ATP synthase produces ATP from ADP in the presence of a proton or sodium gradient. F-type ATPases consist of two structural domains, F(1) containing the extramembraneous catalytic core and F(0) containing the membrane proton channel, linked together by a central stalk and a peripheral stalk. During catalysis, ATP synthesis in the catalytic domain of F(1) is coupled via a rotary mechanism of the central stalk subunits to proton translocation. Key component of the F(0) channel; it plays a direct role in translocation across the membrane. A homomeric c-ring of between 10-14 subunits forms the central stalk rotor element with the F(1) delta and epsilon subunits. This is ATP synthase subunit c, chloroplastic from Cycas taitungensis (Prince sago).